We begin with the raw amino-acid sequence, 295 residues long: Calcium-regulated actin-bundling protein (295 aa).

Monomer.

Its function is as follows. May contribute to the structure and reorganization of filopodia and pseudopodia accompanying cell movements. This chain is Calcium-regulated actin-bundling protein (abpB), found in Dictyostelium discoideum (Social amoeba).